We begin with the raw amino-acid sequence, 142 residues long: Baculoviral IAP repeat-containing protein 5 (142 aa).

The stretch at 18–88 (RISTFKNWPF…KHSSGCAFLS (71 aa)) is one BIR repeat. S20 is subject to Phosphoserine; by AURKC. N6-acetyllysine is present on K23. T34 carries the post-translational modification Phosphothreonine; by CDK1 and CDK15. T48 is modified (phosphothreonine). Residues C57, C60, H77, and C84 each coordinate Zn(2+). N6-acetyllysine is present on residues K90, K110, K112, and K115. Phosphothreonine; by AURKB is present on T117. K129 carries the post-translational modification N6-acetyllysine.

This sequence belongs to the IAP family. Monomer or homodimer. Exists as a homodimer in the apo state and as a monomer in the CPC-bound state. The monomer protects cells against apoptosis more efficiently than the dimer. Only the dimeric form is capable of enhancing tubulin stability in cells. When phosphorylated, interacts with LAMTOR5/HBXIP; the resulting complex binds pro-CASP9, as well as active CASP9, but much less efficiently. Component of the chromosomal passenger complex (CPC) composed of at least BIRC5/survivin, CDCA8/borealin, INCENP, AURKB or AURKC; in the complex forms a triple-helix bundle-based subcomplex with INCENP and CDCA8. Interacts with JTB. Interacts (via BIR domain) with histone H3 phosphorylated at 'Thr-3' (H3pT3). Interacts with EVI5. Interacts with GTP-bound RAN in both the S and M phases of the cell cycle. Interacts with USP9X. Interacts with tubulin. Interacts with BIRC2/c-IAP1. The acetylated form at Lys-129 interacts with STAT3. The monomeric form deacetylated at Lys-129 interacts with XPO1/CRM1. The monomeric form interacts with XIAP/BIRC4. Both the dimeric and monomeric form can interact with DIABLO/SMAC. Interacts with BIRC6/bruce. Interacts with FBXL7; this interaction facilitates the polyubiquitination and subsequent proteasomal degradation of BIRC5 by the SCF(FBXL7) E3 ubiquitin-protein ligase complex. Ubiquitinated by the Cul9-RING ubiquitin-protein ligase complex, leading to its degradation. Ubiquitination is required for centrosomal targeting. Deubiquitinated by USP35 or USP38; leading to stabilization. Post-translationally, acetylation at Lys-129 results in its homodimerization, while deacetylation promotes the formation of monomers which heterodimerize with XPO1/CRM1 which facilitates its nuclear export. The acetylated form represses STAT3 transactivation. The dynamic equilibrium between its acetylation and deacetylation at Lys-129 determines its interaction with XPO1/CRM1, its subsequent subcellular localization, and its ability to inhibit STAT3 transactivation. In terms of processing, in vitro phosphorylation at Thr-117 by AURKB prevents interaction with INCENP and localization to mitotic chromosomes. Phosphorylation at Thr-48 by CK2 is critical for its mitotic and anti-apoptotic activities. Phosphorylation at Thr-34 by CDK15 is critical for its anti-apoptotic activity. Phosphorylation at Ser-20 by AURKC is critical for regulation of proper chromosome alignment and segregation, and possibly cytokinesis.

The protein localises to the cytoplasm. It is found in the nucleus. The protein resides in the chromosome. It localises to the centromere. Its subcellular location is the cytoskeleton. The protein localises to the spindle. It is found in the kinetochore. The protein resides in the midbody. Its function is as follows. Multitasking protein that has dual roles in promoting cell proliferation and preventing apoptosis. Component of a chromosome passage protein complex (CPC) which is essential for chromosome alignment and segregation during mitosis and cytokinesis. Acts as an important regulator of the localization of this complex; directs CPC movement to different locations from the inner centromere during prometaphase to midbody during cytokinesis and participates in the organization of the center spindle by associating with polymerized microtubules. Involved in the recruitment of CPC to centromeres during early mitosis via association with histone H3 phosphorylated at 'Thr-3' (H3pT3) during mitosis. The complex with RAN plays a role in mitotic spindle formation by serving as a physical scaffold to help deliver the RAN effector molecule TPX2 to microtubules. May counteract a default induction of apoptosis in G2/M phase. The acetylated form represses STAT3 transactivation of target gene promoters. May play a role in neoplasia. Inhibitor of CASP3 and CASP7. Essential for the maintenance of mitochondrial integrity and function. The chain is Baculoviral IAP repeat-containing protein 5 (BIRC5) from Sus scrofa (Pig).